Here is a 94-residue protein sequence, read N- to C-terminus: Aspartyl/glutamyl-tRNA(Asn/Gln) amidotransferase subunit C (94 aa).

It belongs to the GatC family. Heterotrimer of A, B and C subunits.

The enzyme catalyses L-glutamyl-tRNA(Gln) + L-glutamine + ATP + H2O = L-glutaminyl-tRNA(Gln) + L-glutamate + ADP + phosphate + H(+). It carries out the reaction L-aspartyl-tRNA(Asn) + L-glutamine + ATP + H2O = L-asparaginyl-tRNA(Asn) + L-glutamate + ADP + phosphate + 2 H(+). In terms of biological role, allows the formation of correctly charged Asn-tRNA(Asn) or Gln-tRNA(Gln) through the transamidation of misacylated Asp-tRNA(Asn) or Glu-tRNA(Gln) in organisms which lack either or both of asparaginyl-tRNA or glutaminyl-tRNA synthetases. The reaction takes place in the presence of glutamine and ATP through an activated phospho-Asp-tRNA(Asn) or phospho-Glu-tRNA(Gln). In Caldicellulosiruptor bescii (strain ATCC BAA-1888 / DSM 6725 / KCTC 15123 / Z-1320) (Anaerocellum thermophilum), this protein is Aspartyl/glutamyl-tRNA(Asn/Gln) amidotransferase subunit C.